The chain runs to 441 residues: Transcription factor TOXE (441 aa).

The basic DNA-binding region stretch occupies residues 14-40 (TDINERRKLQNRVAQRKYRTRQKTRMK). Residues 209–243 (FEPNDQRKTENLPREPCGSCPSSSHGYSPTSGNPS) are disordered. A compositionally biased stretch (basic and acidic residues) spans 212-221 (NDQRKTENLP). Over residues 228–241 (CPSSSHGYSPTSGN) the composition is skewed to polar residues. 4 ANK repeats span residues 289 to 318 (DQFS…PLDI), 322 to 351 (SGKT…EMLA), 355 to 384 (EGNS…SCRE), and 413 to 440 (EGMT…SANV).

It belongs to the bZIP family. Monomer.

Its subcellular location is the nucleus. Transcription factor, part of the diffuse TOX2 gene cluster that mediates the biosynthesis of the HC-toxin, cyclic tetrapeptide of structure cyclo(D-Pro-L-Ala-D-Ala-L-Aeo), where Aeo stands for 2-amino-9,10-epoxi-8-oxodecanoic acid. HC-toxin is a determinant of specificity and virulence in the interaction between the producing fungus and its host, maize. TOXE is a pathway-specific transcription factor which coordinates the expression of genes involved in HC-toxin biosynthesis. Binds to the tox-box, a 10-bp motif with the consensus 5'-ATCTCNCGNA-3', which is found in the promoter of all genes involved in HC-toxin biosynthesis. Required for pathogenicity of the fungus on maize. The chain is Transcription factor TOXE from Cochliobolus carbonum (Maize leaf spot fungus).